The chain runs to 150 residues: Transcription antitermination protein NusB (150 aa).

This sequence belongs to the NusB family.

Involved in transcription antitermination. Required for transcription of ribosomal RNA (rRNA) genes. Binds specifically to the boxA antiterminator sequence of the ribosomal RNA (rrn) operons. In Streptococcus pyogenes serotype M6 (strain ATCC BAA-946 / MGAS10394), this protein is Transcription antitermination protein NusB.